The sequence spans 433 residues: NADH-ubiquinone oxidoreductase chain 4 (433 aa).

13 consecutive transmembrane segments (helical) span residues 10-30 (LFFL…TLFL), 45-65 (FFFF…ISIL), 80-100 (IFNF…MLEN), 101-121 (LLMF…MISG), 132-152 (GFYM…LMLL), 169-189 (MGFI…MFLF), 203-223 (AGSM…LYRF), 234-254 (FSFV…IFCL), 261-281 (SLIA…CVTF), 286-306 (SFGM…LFCL), 331-353 (LSMW…NLFG), 366-386 (LLLS…SMFM), and 410-430 (YLML…NFFM).

It belongs to the complex I subunit 4 family.

The protein resides in the mitochondrion membrane. It carries out the reaction a ubiquinone + NADH + 5 H(+)(in) = a ubiquinol + NAD(+) + 4 H(+)(out). Core subunit of the mitochondrial membrane respiratory chain NADH dehydrogenase (Complex I) that is believed to belong to the minimal assembly required for catalysis. Complex I functions in the transfer of electrons from NADH to the respiratory chain. The immediate electron acceptor for the enzyme is believed to be ubiquinone. The protein is NADH-ubiquinone oxidoreductase chain 4 (ND4) of Rhipicephalus sanguineus (Brown dog tick).